The primary structure comprises 219 residues: Orotate phosphoribosyltransferase (219 aa).

Position 26 (Lys-26) interacts with 5-phospho-alpha-D-ribose 1-diphosphate. 34 to 35 is an orotate binding site; sequence FF. Residues 72–73, Arg-98, Lys-99, Lys-102, His-104, and 124–132 each bind 5-phospho-alpha-D-ribose 1-diphosphate; these read YK and DDVITAGTA. 2 residues coordinate orotate: Thr-128 and Arg-156.

This sequence belongs to the purine/pyrimidine phosphoribosyltransferase family. PyrE subfamily. As to quaternary structure, homodimer. Mg(2+) serves as cofactor.

The enzyme catalyses orotidine 5'-phosphate + diphosphate = orotate + 5-phospho-alpha-D-ribose 1-diphosphate. It participates in pyrimidine metabolism; UMP biosynthesis via de novo pathway; UMP from orotate: step 1/2. Catalyzes the transfer of a ribosyl phosphate group from 5-phosphoribose 1-diphosphate to orotate, leading to the formation of orotidine monophosphate (OMP). The chain is Orotate phosphoribosyltransferase from Stenotrophomonas maltophilia (strain K279a).